Reading from the N-terminus, the 84-residue chain is MSQTENAVTSSSGAKRAYRKGNPLSDAEKQRLSVARKRASFKEVKVFLEPKYKAMLMQMCHEDGLTQAEVLTALIKSEAQKRCV.

Residues 1 to 13 (MSQTENAVTSSSG) are compositionally biased toward polar residues. Residues 1–31 (MSQTENAVTSSSGAKRAYRKGNPLSDAEKQR) form a disordered region.

Its function is as follows. This protein is involved in the determination of copy number in gene replication. It binds to the repA promoter thus inhibiting the synthesis of the mRNA for the initiator protein repA. This chain is Replication regulatory protein repA2 (repA2), found in Escherichia coli O157:H7.